The chain runs to 296 residues: Protein csh3 (296 aa).

A disordered region spans residues 46–138; that stretch reads ASPVTAPAAQ…PPSYPGPNTA (93 aa). Positions 93-103 are enriched in basic and acidic residues; the sequence is GEKRTPEEPRK. Over residues 111-124 the composition is skewed to polar residues; it reads QKQSEASSVNSSTE. One can recognise an SH3 domain in the interval 140–199; sequence KNVERVLAMYDFPGPDAGDLGFHAGEVIIVLEHVNNDWWRGELNGKEGIFPSNYVRLLED. Residues 202-246 are disordered; that stretch reads VKAQPPPPPPQQNYPPAASSSAPPMQYQQTAYPPQQAPYPPVQAY. Residues 205–214 are compositionally biased toward pro residues; sequence QPPPPPPQQN. Residues 215 to 235 show a composition bias toward low complexity; sequence YPPAASSSAPPMQYQQTAYPP.

The sequence is that of Protein csh3 (csh3) from Schizosaccharomyces pombe (strain 972 / ATCC 24843) (Fission yeast).